The chain runs to 282 residues: MVRKMKLPFLNKNTSSSSFSSNSSSSSSSWPWPSSHQQNLKTISSKASFIVNKPKDVYEPEPPPRSFSSSPSSSSYSSFSSTSHAIENPPEIESIENVIKGLKSSKRLIFERRGTSNSILEEATKRDDHEEEEDGLMLLSLESNDPYTDFKNSMEKMVEVHVLHHDWISLEKLLFWFLKVNVKASHRYIFAAFVDLVLNLAVGPSKDVAGEPNSDVVVEDSLSSSWPVSLYSSSDENSSTSVRFLPETSIGEKGRDVCCLSSLFELEEKIKDNIDPNDYVSS.

Positions Met-1–Ala-85 are disordered. Residues Ser-15–Ser-35 show a composition bias toward low complexity. Residues His-36–Ala-47 show a composition bias toward polar residues. Positions Ser-66–Ala-85 are enriched in low complexity. The OVATE domain occupies Leu-139–Asn-199.

Expressed in roots and shoots.

It is found in the nucleus. Its function is as follows. Transcriptional repressor that regulates multiple aspects of plant growth and development through the regulation of BEL1-LIKE (BLH) and KNOX TALE (KNAT) homeodomain transcription factors. This Arabidopsis thaliana (Mouse-ear cress) protein is Transcription repressor OFP18 (OFP18).